The primary structure comprises 156 residues: Ribosomal RNA large subunit methyltransferase H (156 aa).

Residues L73, G104, and 123-128 (LSSLTL) each bind S-adenosyl-L-methionine.

It belongs to the RNA methyltransferase RlmH family. In terms of assembly, homodimer.

The protein resides in the cytoplasm. It carries out the reaction pseudouridine(1915) in 23S rRNA + S-adenosyl-L-methionine = N(3)-methylpseudouridine(1915) in 23S rRNA + S-adenosyl-L-homocysteine + H(+). In terms of biological role, specifically methylates the pseudouridine at position 1915 (m3Psi1915) in 23S rRNA. The polypeptide is Ribosomal RNA large subunit methyltransferase H (Neisseria gonorrhoeae (strain ATCC 700825 / FA 1090)).